The following is a 59-amino-acid chain: Small, acid-soluble spore protein H 2 (59 aa).

Belongs to the SspH family.

The protein resides in the spore core. This is Small, acid-soluble spore protein H 2 from Geobacillus kaustophilus (strain HTA426).